Here is a 106-residue protein sequence, read N- to C-terminus: Thiosulfate sulfurtransferase GlpE (106 aa).

One can recognise a Rhodanese domain in the interval 17-105 (SRGEARLVDI…WHRASLPVEA (89 aa)). Cys-65 (cysteine persulfide intermediate) is an active-site residue.

This sequence belongs to the GlpE family.

The protein localises to the cytoplasm. It catalyses the reaction thiosulfate + hydrogen cyanide = thiocyanate + sulfite + 2 H(+). It carries out the reaction thiosulfate + [thioredoxin]-dithiol = [thioredoxin]-disulfide + hydrogen sulfide + sulfite + 2 H(+). Its function is as follows. Transferase that catalyzes the transfer of sulfur from thiosulfate to thiophilic acceptors such as cyanide or dithiols. May function in a CysM-independent thiosulfate assimilation pathway by catalyzing the conversion of thiosulfate to sulfite, which can then be used for L-cysteine biosynthesis. This is Thiosulfate sulfurtransferase GlpE from Vibrio vulnificus (strain CMCP6).